Here is a 224-residue protein sequence, read N- to C-terminus: Lipoprotein-releasing system ATP-binding protein LolD (224 aa).

Positions 4 to 224 (LSIRNVFKSY…RLAGGEVSEA (221 aa)) constitute an ABC transporter domain. 40–47 (GASGAGKS) serves as a coordination point for ATP.

The protein belongs to the ABC transporter superfamily. Lipoprotein translocase (TC 3.A.1.125) family. As to quaternary structure, the complex is composed of two ATP-binding proteins (LolD) and two transmembrane proteins (LolC and LolE).

Its subcellular location is the cell inner membrane. Part of the ABC transporter complex LolCDE involved in the translocation of mature outer membrane-directed lipoproteins, from the inner membrane to the periplasmic chaperone, LolA. Responsible for the formation of the LolA-lipoprotein complex in an ATP-dependent manner. The chain is Lipoprotein-releasing system ATP-binding protein LolD from Myxococcus xanthus (strain DK1622).